The primary structure comprises 230 residues: Nucleoside diphosphate kinase 2, chloroplastic (230 aa).

A chloroplast-targeting transit peptide spans 1–64 (MEAMAVFSGS…SYPKTFRTRS (64 aa)). Residues Lys-90, Phe-138, Arg-166, Thr-172, Arg-183, and Asn-193 each contribute to the ATP site. His-196 (pros-phosphohistidine intermediate) is an active-site residue.

The protein belongs to the NDK family. Mg(2+) is required as a cofactor.

The protein resides in the plastid. It is found in the chloroplast. The enzyme catalyses a 2'-deoxyribonucleoside 5'-diphosphate + ATP = a 2'-deoxyribonucleoside 5'-triphosphate + ADP. The catalysed reaction is a ribonucleoside 5'-diphosphate + ATP = a ribonucleoside 5'-triphosphate + ADP. In terms of biological role, major role in the synthesis of nucleoside triphosphates other than ATP. The ATP gamma phosphate is transferred to the NDP beta phosphate via a ping-pong mechanism, using a phosphorylated active-site intermediate. In Pisum sativum (Garden pea), this protein is Nucleoside diphosphate kinase 2, chloroplastic (NDPK2).